The following is a 466-amino-acid chain: 55 kDa erythrocyte membrane protein (466 aa).

An N-acetylthreonine modification is found at T2. Phosphoserine occurs at positions 13 and 19. T49 is subject to Phosphothreonine. S52, S57, and S110 each carry phosphoserine. Residues 71-152 (LIQFEKVTEE…MISLKVIPNQ (82 aa)) form the PDZ domain. The region spanning 158–228 (ALQMFMRAQF…PSPELQEWRV (71 aa)) is the SH3 domain. A Phosphoserine modification is found at S243. The tract at residues 268–466 (VVSYEEVVRL…PQWVPVSWVY (199 aa)) is interaction with PALS1. The region spanning 282 to 451 (RKTLVLIGAS…TLKKLQEAFD (170 aa)) is the Guanylate kinase-like domain.

The protein belongs to the MAGUK family. In terms of assembly, heterodimer with PALS1. Interacts with DLG5 and NF2. Interacts (via guanylate kinase-like domain) with WHRN (via third PDZ domain). Palmitoylated.

It is found in the cell membrane. The protein localises to the cell projection. Its subcellular location is the stereocilium. Its function is as follows. Essential regulator of neutrophil polarity. Regulates neutrophil polarization by regulating AKT1 phosphorylation through a mechanism that is independent of PIK3CG activity. The sequence is that of 55 kDa erythrocyte membrane protein (MPP1) from Pongo abelii (Sumatran orangutan).